Consider the following 242-residue polypeptide: ATP synthase subunit a, organellar chromatophore (242 aa).

5 helical membrane-spanning segments follow: residues 28 to 48, 89 to 109, 128 to 148, 193 to 213, and 214 to 234; these read LHGQVFISSWVVISALLVLVI, LPFIGTLFLFIFGCNWGGALV, INTTVAMALLVSLSYFYAGLS, LVVGVLAFLVPILVPLPAMFL, and GLFTSAIQALIFATLAANYIG.

Belongs to the ATPase A chain family. As to quaternary structure, F-type ATPases have 2 components, CF(1) - the catalytic core - and CF(0) - the membrane proton channel. CF(1) has five subunits: alpha(3), beta(3), gamma(1), delta(1), epsilon(1). CF(0) has four main subunits: a, b, b' and c.

The protein localises to the plastid. It localises to the organellar chromatophore thylakoid membrane. Its function is as follows. Key component of the proton channel; it plays a direct role in the translocation of protons across the membrane. In Paulinella chromatophora, this protein is ATP synthase subunit a, organellar chromatophore.